The primary structure comprises 275 residues: 2,3,4,5-tetrahydropyridine-2,6-dicarboxylate N-succinyltransferase (275 aa).

Residues Arg106 and Asp143 each contribute to the substrate site.

It belongs to the transferase hexapeptide repeat family. As to quaternary structure, homotrimer.

Its subcellular location is the cytoplasm. It catalyses the reaction (S)-2,3,4,5-tetrahydrodipicolinate + succinyl-CoA + H2O = (S)-2-succinylamino-6-oxoheptanedioate + CoA. The protein operates within amino-acid biosynthesis; L-lysine biosynthesis via DAP pathway; LL-2,6-diaminopimelate from (S)-tetrahydrodipicolinate (succinylase route): step 1/3. This is 2,3,4,5-tetrahydropyridine-2,6-dicarboxylate N-succinyltransferase from Cupriavidus pinatubonensis (strain JMP 134 / LMG 1197) (Cupriavidus necator (strain JMP 134)).